Reading from the N-terminus, the 682-residue chain is Transcription factor 12 (682 aa).

Residues aspartate 19–phenylalanine 27 carry the 9aaTAD motif. Disordered regions lie at residues alanine 25–arginine 122, leucine 140–serine 219, and serine 281–threonine 313. 2 stretches are compositionally biased toward polar residues: residues proline 30–glycine 48 and glycine 56–phenylalanine 76. A phosphoserine mark is found at serine 47, serine 67, and serine 79. Over residues histidine 81 to alanine 93 the composition is skewed to basic and acidic residues. Position 98 is a phosphoserine (serine 98). Composition is skewed to polar residues over residues proline 101–serine 121 and alanine 144–serine 163. A Glycyl lysine isopeptide (Lys-Gly) (interchain with G-Cter in SUMO2) cross-link involves residue lysine 110. The residue at position 116 (serine 116) is a Phosphoserine. Residues leucine 119–leucine 140 form a leucine-zipper region. Lysine 181 participates in a covalent cross-link: Glycyl lysine isopeptide (Lys-Gly) (interchain with G-Cter in SUMO2). An interaction with RUNX1T1 region spans residues lysine 182–alanine 196. Residues valine 282–proline 306 are compositionally biased toward polar residues. Position 313 is a phosphothreonine (threonine 313). The residue at position 333 (serine 333) is a Phosphoserine. Disordered regions lie at residues proline 349–serine 395 and serine 462–methionine 580. The span at threonine 352–proline 363 shows a compositional bias: low complexity. Polar residues-rich tracts occupy residues valine 364–tryptophan 376 and alanine 383–serine 395. Residues serine 481–threonine 492 show a composition bias toward low complexity. Over residues leucine 506–glutamate 517 the composition is skewed to polar residues. Composition is skewed to basic and acidic residues over residues isoleucine 518–histidine 530 and aspartate 536–valine 551. Lysine 519 is covalently cross-linked (Glycyl lysine isopeptide (Lys-Gly) (interchain with G-Cter in SUMO2)). Residue serine 540 is modified to Phosphoserine. Lysine 550 participates in a covalent cross-link: Glycyl lysine isopeptide (Lys-Gly) (interchain with G-Cter in SUMO2). Residue threonine 557 is modified to Phosphothreonine. Phosphoserine occurs at positions 558 and 559. Basic and acidic residues predominate over residues proline 568–methionine 580. The region spanning glutamate 577–leucine 630 is the bHLH domain. Residues lysine 609 and lysine 653 each participate in a glycyl lysine isopeptide (Lys-Gly) (interchain with G-Cter in SUMO2) cross-link. The class A specific domain stretch occupies residues glutamine 632–serine 655. The segment at glutamate 651–methionine 682 is disordered. The segment covering proline 661–leucine 672 has biased composition (low complexity). Over residues serine 673–methionine 682 the composition is skewed to polar residues.

As to quaternary structure, efficient DNA binding requires dimerization with another bHLH protein. Forms homo- or heterooligomers with myogenin, E12 and ITF2 proteins. Interacts with PTF1A. Interacts with NEUROD2. Interacts with RUNX1T1. Interacts with AML1-MTG8/ETO (via nervy homology region 2 in oligomerized form). Interacts with BHLHA9. In terms of tissue distribution, expressed in several tissues and cell types including skeletal muscle, thymus, and a B-cell line.

The protein resides in the nucleus. Functionally, transcriptional regulator. Involved in the initiation of neuronal differentiation. Activates transcription by binding to the E box (5'-CANNTG-3'). May be involved in the functional network that regulates the development of the GnRH axis. This Homo sapiens (Human) protein is Transcription factor 12 (TCF12).